Reading from the N-terminus, the 46-residue chain is Iota-conotoxin RXIA (46 aa).

Pro2 and Pro11 each carry 4-hydroxyproline; partial. 4 disulfides stabilise this stretch: Cys5/Cys19, Cys12/Cys22, Cys18/Cys27, and Cys21/Cys38. 4-hydroxyproline is present on Pro29. At Phe44 the chain carries D-phenylalanine.

Belongs to the conotoxin I1 superfamily. In terms of processing, the natural D-Phe-44 form of the peptide is more potent than the L-Phe-44 form. In terms of tissue distribution, expressed by the venom duct.

The protein resides in the secreted. In terms of biological role, iota-conotoxins bind to voltage-gated sodium channels and act as agonists by shifting the voltage-dependence of activation to more hyperpolarized levels. This toxin acts on Nav1.6/SCN8A &gt; Nav1.2/SCN2A &gt; Nav1.7/SCN9A sodium channels. Produces general excitatory symptoms upon intracorporeal injection and repetitive action potentials in the frog cutaneous pectoris muscle. Natural peptide (with D-Phe) is active on nerve, but not on muscle. Synthetic peptide (with L-Phe) is not active on both nerve and muscle. This chain is Iota-conotoxin RXIA, found in Conus radiatus (Rayed cone).